Reading from the N-terminus, the 229-residue chain is tRNA (guanine-N(7)-)-methyltransferase (229 aa).

4 residues coordinate S-adenosyl-L-methionine: Glu59, Glu84, Asp111, and Asp134. Residue Asp134 is part of the active site. Residue Lys138 coordinates substrate. Positions 140–145 (KHNKRR) are interaction with RNA. Residues Asp170 and 207 to 210 (TKFE) each bind substrate.

Belongs to the class I-like SAM-binding methyltransferase superfamily. TrmB family.

The catalysed reaction is guanosine(46) in tRNA + S-adenosyl-L-methionine = N(7)-methylguanosine(46) in tRNA + S-adenosyl-L-homocysteine. The protein operates within tRNA modification; N(7)-methylguanine-tRNA biosynthesis. In terms of biological role, catalyzes the formation of N(7)-methylguanine at position 46 (m7G46) in tRNA. This Saccharophagus degradans (strain 2-40 / ATCC 43961 / DSM 17024) protein is tRNA (guanine-N(7)-)-methyltransferase.